We begin with the raw amino-acid sequence, 159 residues long: Transmembrane protein 92 (159 aa).

The first 26 residues, 1–26 (MSQAWVPGLAPTLLFSLLAGPQKIAA), serve as a signal peptide directing secretion. Topologically, residues 27 to 57 (KCGLILACPKGFKCCGDSCCQENELFPGPVR) are extracellular. The helical transmembrane segment at 58–78 (IFVIIFLVILSVFCICGLAKC) threads the bilayer. The Cytoplasmic segment spans residues 79-159 (FCRNCREPEP…DQRGIDNPAF (81 aa)). A disordered region spans residues 122 to 159 (EVILKPSLGPTPTEPPPPYSFRPEEYTGDQRGIDNPAF).

Its subcellular location is the membrane. This Homo sapiens (Human) protein is Transmembrane protein 92 (TMEM92).